Here is a 62-residue protein sequence, read N- to C-terminus: Temporin-CDYb (62 aa).

Positions 1-22 (MFTLKKSLLLLFFLGTINLSLC) are cleaved as a signal peptide. The propeptide occupies 23–45 (EEERDADEEERRDDPEERAVQVE). The residue at position 60 (Leu-60) is a Leucine amide.

Belongs to the frog skin active peptide (FSAP) family. Temporin subfamily. Expressed by the skin glands.

It is found in the secreted. Its function is as follows. Antimicrobial peptide. Has low activity against the Gram-positive bacterium S.aureus (MIC&gt;100 uM) and the Gram-negative bacterium E.coli (MIC&gt;100 uM). Has weak hemolytic activity against human erythrocytes. The polypeptide is Temporin-CDYb (Rana dybowskii (Dybovsky's frog)).